A 213-amino-acid chain; its full sequence is Maleamate amidohydrolase (213 aa).

The active-site Nucleophile is cysteine 154.

The protein belongs to the isochorismatase family.

It carries out the reaction maleamate + H2O = maleate + NH4(+). Its pathway is cofactor degradation; nicotinate degradation. Functionally, maleamate amidase that transforms maleamate into maleate and ammonia in the aerobic nicotinate degradation pathway. This Pseudomonas putida (strain ATCC 47054 / DSM 6125 / CFBP 8728 / NCIMB 11950 / KT2440) protein is Maleamate amidohydrolase (nicF).